Reading from the N-terminus, the 287-residue chain is MAVLAPLLAFLYAVPGLLRWVSQPYYLLSALLSVSFLLVRKVPPVCSVLPTQREDGNPCDFDWREVEILMFLSAIVMMKNRRSITVEQHIGNIFMFSKVANTILFFRLDLRMGLLYITLCIVFLMTCKPPLYLGPEHIKYFSDKTLEEELQSDGRVSWIIEFFANWSSECQSFAPIYAELSLKYNCAGLKFGKVDIGRYPEVSSRYSISPSPLSKQLPTLILFQGGREIFRRPQVDKKGRAVSWSFTQENVIREFNLNELYQKAKKIRKHQEDTINENEYNDSKKDQ.

Positions 1–35 (MAVLAPLLAFLYAVPGLLRWVSQPYYLLSALLSVS) are cleaved as a signal peptide. The Extracellular portion of the chain corresponds to 36-112 (FLLVRKVPPV…ILFFRLDLRM (77 aa)). Residues 113-133 (GLLYITLCIVFLMTCKPPLYL) form a helical membrane-spanning segment. The Cytoplasmic segment spans residues 134-287 (GPEHIKYFSD…NEYNDSKKDQ (154 aa)). Residues 135–269 (PEHIKYFSDK…LYQKAKKIRK (135 aa)) form the Thioredoxin domain. The short motif at 284-287 (KKDQ) is the Di-lysine motif element.

As to quaternary structure, monomer. Homodimer; disulfide-linked. Occurs in both reduced and oxidized monomeric form. Oxidative conditions increase homodimerization.

Its subcellular location is the endoplasmic reticulum membrane. It is found in the mitochondrion membrane. Endoplasmic reticulum and mitochondria-associated protein that probably functions as a regulator of cellular redox state and thereby regulates protein post-translational modification, protein folding and mitochondrial activity. The protein is Thioredoxin-related transmembrane protein 2 (tmx2) of Xenopus tropicalis (Western clawed frog).